A 210-amino-acid chain; its full sequence is Small ribosomal subunit protein uS3 (210 aa).

Residues 38 to 106 (IRAFLKKRLY…EIFINIIEVR (69 aa)) enclose the KH type-2 domain.

Belongs to the universal ribosomal protein uS3 family. Part of the 30S ribosomal subunit. Forms a tight complex with proteins S10 and S14.

Functionally, binds the lower part of the 30S subunit head. Binds mRNA in the 70S ribosome, positioning it for translation. The sequence is that of Small ribosomal subunit protein uS3 from Pelobacter propionicus (strain DSM 2379 / NBRC 103807 / OttBd1).